Consider the following 243-residue polypeptide: Ubiquinone/menaquinone biosynthesis C-methyltransferase UbiE (243 aa).

S-adenosyl-L-methionine-binding positions include Thr-69, Asp-90, and 116-117 (DA).

This sequence belongs to the class I-like SAM-binding methyltransferase superfamily. MenG/UbiE family.

It carries out the reaction a 2-demethylmenaquinol + S-adenosyl-L-methionine = a menaquinol + S-adenosyl-L-homocysteine + H(+). It catalyses the reaction a 2-methoxy-6-(all-trans-polyprenyl)benzene-1,4-diol + S-adenosyl-L-methionine = a 5-methoxy-2-methyl-3-(all-trans-polyprenyl)benzene-1,4-diol + S-adenosyl-L-homocysteine + H(+). It participates in quinol/quinone metabolism; menaquinone biosynthesis; menaquinol from 1,4-dihydroxy-2-naphthoate: step 2/2. The protein operates within cofactor biosynthesis; ubiquinone biosynthesis. Its function is as follows. Methyltransferase required for the conversion of demethylmenaquinol (DMKH2) to menaquinol (MKH2) and the conversion of 2-polyprenyl-6-methoxy-1,4-benzoquinol (DDMQH2) to 2-polyprenyl-3-methyl-6-methoxy-1,4-benzoquinol (DMQH2). The protein is Ubiquinone/menaquinone biosynthesis C-methyltransferase UbiE of Ralstonia nicotianae (strain ATCC BAA-1114 / GMI1000) (Ralstonia solanacearum).